Consider the following 294-residue polypeptide: MSYKSGFVSVIGRPNVGKSTLINNLIGQKVVITSPRPQTTRNSVRGIYTRPEGQIVFVDTPGIHKARNKLDNYMLEKAYESLEDIDVIIFMVDGNYSFGKGDEFIYNQIKGVRVPVIVAMNKIDRINKEIVMERQKNYEERTGFPVIPISASRGTNLDTLVEEIFTFLPEGPQYYPEDMVTDQIEQFVVAELIREKVFILTREEVPYGVAVKIEEMKERDNSTMYIRANIYAEKKSHKKIIIGHKGKMIKKIGRLAREEIEKLLQTKVYLDLWVKIEKDWREKEGLVKRMGYKG.

The Era-type G domain occupies 4–170 (KSGFVSVIGR…VEEIFTFLPE (167 aa)). A G1 region spans residues 12–19 (GRPNVGKS). A GTP-binding site is contributed by 12-19 (GRPNVGKS). The tract at residues 38–42 (QTTRN) is G2. The tract at residues 59-62 (DTPG) is G3. GTP is bound by residues 59-63 (DTPGI) and 121-124 (NKID). The G4 stretch occupies residues 121-124 (NKID). The G5 stretch occupies residues 149–151 (ISA). A KH type-2 domain is found at 201–278 (TREEVPYGVA…YLDLWVKIEK (78 aa)).

The protein belongs to the TRAFAC class TrmE-Era-EngA-EngB-Septin-like GTPase superfamily. Era GTPase family. As to quaternary structure, monomer.

The protein resides in the cytoplasm. The protein localises to the cell inner membrane. Its function is as follows. An essential GTPase that binds both GDP and GTP, with rapid nucleotide exchange. Plays a role in 16S rRNA processing and 30S ribosomal subunit biogenesis and possibly also in cell cycle regulation and energy metabolism. This chain is GTPase Era, found in Halothermothrix orenii (strain H 168 / OCM 544 / DSM 9562).